A 357-amino-acid polypeptide reads, in one-letter code: Sulfate/thiosulfate import ATP-binding protein CysA (357 aa).

Positions 3 to 237 (IVIQNVSKSF…PKSPFVYDFL (235 aa)) constitute an ABC transporter domain. ATP is bound at residue 35–42 (GPSGSGKT).

It belongs to the ABC transporter superfamily. Sulfate/tungstate importer (TC 3.A.1.6) family. In terms of assembly, the complex is composed of two ATP-binding proteins (CysA), two transmembrane proteins (CysT and CysW) and a solute-binding protein (CysP).

Its subcellular location is the cell membrane. It carries out the reaction sulfate(out) + ATP + H2O = sulfate(in) + ADP + phosphate + H(+). The enzyme catalyses thiosulfate(out) + ATP + H2O = thiosulfate(in) + ADP + phosphate + H(+). Part of the ABC transporter complex CysAWTP involved in sulfate/thiosulfate import. Responsible for energy coupling to the transport system. The protein is Sulfate/thiosulfate import ATP-binding protein CysA of Halalkalibacterium halodurans (strain ATCC BAA-125 / DSM 18197 / FERM 7344 / JCM 9153 / C-125) (Bacillus halodurans).